A 277-amino-acid chain; its full sequence is Phosphoenolpyruvate synthase regulatory protein (277 aa).

Residue Gly157–Thr164 participates in ADP binding.

This sequence belongs to the pyruvate, phosphate/water dikinase regulatory protein family. PSRP subfamily.

The catalysed reaction is [pyruvate, water dikinase] + ADP = [pyruvate, water dikinase]-phosphate + AMP + H(+). The enzyme catalyses [pyruvate, water dikinase]-phosphate + phosphate + H(+) = [pyruvate, water dikinase] + diphosphate. Bifunctional serine/threonine kinase and phosphorylase involved in the regulation of the phosphoenolpyruvate synthase (PEPS) by catalyzing its phosphorylation/dephosphorylation. The protein is Phosphoenolpyruvate synthase regulatory protein of Salmonella gallinarum (strain 287/91 / NCTC 13346).